We begin with the raw amino-acid sequence, 665 residues long: Mitochondrial Rho GTPase 1 (665 aa).

Residues 1–634 (MTNDVIRIVV…NQDPEEETNT (634 aa)) lie on the Cytoplasmic side of the membrane. The 175-residue stretch at 3 to 177 (NDVIRIVVCG…FYLCQKAVMH (175 aa)) folds into the Miro 1 domain. GTP contacts are provided by residues 12 to 19 (GDEGVGKS), 61 to 67 (DTQFSNS), and 119 to 122 (NVFD). EF-hand domains lie at 193–228 (NAVAALQRVFFLSDRDQDGYLSDQEMLELQVKCFGR) and 313–348 (EGYRFLVDLFLLFDKDNDGGLNDSELKTLFKPTPGI). Residues Asp-206, Asp-208, Asp-210, Tyr-212, Glu-217, Asp-326, Asp-328, Asp-330, and Glu-337 each coordinate Ca(2+). In terms of domain architecture, Miro 2 spans 452–618 (RSVFNCFVLG…FIQLAEAAQQ (167 aa)). GTP-binding positions include 461–468 (GSHMSGKT), 498–502 (EMTGG), and 567–570 (LKAD). The chain crosses the membrane as a helical; Anchor for type IV membrane protein span at residues 635–655 (IMPFALAGGATVLLAAAVAWI). Residues 656–665 (FKNVRVAGRE) are Mitochondrial intermembrane-facing.

Belongs to the mitochondrial Rho GTPase family.

The protein resides in the mitochondrion outer membrane. Functionally, mitochondrial GTPase involved in mitochondrial trafficking. Probably involved in control of anterograde transport of mitochondria and their subcellular distribution. This Yarrowia lipolytica (strain CLIB 122 / E 150) (Yeast) protein is Mitochondrial Rho GTPase 1 (GEM1).